A 424-amino-acid polypeptide reads, in one-letter code: MHDLRAIRDNPEAFDTGLARRGLPPASAAILDLDQRRRAAQTSFQECQARRNEASRLIGAYKKDGKDAQPLLDEVAALKERIPALEEEDRRLGAELDALLAALPNLPAADVPEGKDEHDNVEIRRVGTPRDIPGAKQHFELGEALGLMDFEGAARMSGARFTVLKGQLARLERALGDFMLDLHTREFGYTEVSPPLLVRDEAVFGTGQLPKFADDLFRTTTGHWLIPTAEVTLTNLANDSIIDAEALPWRLTARTPCFRSEAGSAGKDTRGMIRQHQFMKVELVSITLPEQSEAEHERMTKAAETVLERLGLPFRTVVLCTGDMGFSARKTYDIEVWLPGQGAYREISSCSNCGDFQARRMKARSRPKGEKGTQVVHTLNGSGVAVGRALIAVMENYQQPDGSILVPEALRPYMGGQERITAHG.

228-230 contributes to the L-serine binding site; the sequence is TAE. An ATP-binding site is contributed by 259-261; the sequence is RSE. An L-serine-binding site is contributed by Glu-282. 346–349 serves as a coordination point for ATP; that stretch reads EISS. Ser-382 is an L-serine binding site.

The protein belongs to the class-II aminoacyl-tRNA synthetase family. Type-1 seryl-tRNA synthetase subfamily. Homodimer. The tRNA molecule binds across the dimer.

It localises to the cytoplasm. It catalyses the reaction tRNA(Ser) + L-serine + ATP = L-seryl-tRNA(Ser) + AMP + diphosphate + H(+). The enzyme catalyses tRNA(Sec) + L-serine + ATP = L-seryl-tRNA(Sec) + AMP + diphosphate + H(+). It functions in the pathway aminoacyl-tRNA biosynthesis; selenocysteinyl-tRNA(Sec) biosynthesis; L-seryl-tRNA(Sec) from L-serine and tRNA(Sec): step 1/1. Functionally, catalyzes the attachment of serine to tRNA(Ser). Is also able to aminoacylate tRNA(Sec) with serine, to form the misacylated tRNA L-seryl-tRNA(Sec), which will be further converted into selenocysteinyl-tRNA(Sec). The protein is Serine--tRNA ligase of Rhodospirillum centenum (strain ATCC 51521 / SW).